A 689-amino-acid polypeptide reads, in one-letter code: MNFENLLIEVGTEELPPKSLRKLAESFLSNFTDELKKAELSFESAVWHAAPRRLAICVNQLALAQADKVVEKRGPAIAQAFDTDGNPTKAAMGWARGNGITVEQAGRLKTDKGEWLLHQAKVVGVETKSLIAAMAQRSLDKLPIPKPMRWGNNTTQFIRPVHTVTMLLGSEVVEGELLGQKSARIIRGHRFMGKASFELVHADNYLSALKEQGKVEANYEVRKALIKAGAEAAAAKIGGVADLEDDLLEEVTSLVEWPVVLTANFEEKFLDVPAEALVYTMKGDQKYFPVFDKAGQLMPNFIFVTNIESKDPQQIIAGNERVVRPRLADAEFFFETDKKDSLESRLTSLETVIFQKQLGTIKDRVARISDMAGFIANSIDANADEAARAGLLSKSDLMTNMVMEFTDLQGTMGMHYARLNGETEAVALALQEQYKPKFSGDTVPTAPVSVCVALAEKLDTLVGIFGIGQAPKGAADPFALRRAAIGILRICVENNLPLNLIDLIAKAQELHGSNLTNDKAAEQVLEFFMGRFRAWYQDQGVSVDVILAVLARRPTSPADFDSRIKAVSHFRSLEQASALAAANKRVSNILAKVEGELPAAIDAGLLVENAEKVLAEKLNELQPQLAPLFAAANYQEALALLADLRESVDTFFEDVMVMADDEALKNNRLALLSSLREQFLHAADISLLQ.

Belongs to the class-II aminoacyl-tRNA synthetase family. In terms of assembly, tetramer of two alpha and two beta subunits.

The protein resides in the cytoplasm. It catalyses the reaction tRNA(Gly) + glycine + ATP = glycyl-tRNA(Gly) + AMP + diphosphate. The polypeptide is Glycine--tRNA ligase beta subunit (Shewanella sediminis (strain HAW-EB3)).